A 118-amino-acid polypeptide reads, in one-letter code: uncharacterized protein (118 aa).

The tract at residues 98 to 118 is disordered; the sequence is KGKGNEGREEAEEPLEEPEEG. Residues 106–118 show a composition bias toward acidic residues; that stretch reads EEAEEPLEEPEEG.

It belongs to the UPF0440 family.

This is an uncharacterized protein from Pyrococcus abyssi (strain GE5 / Orsay).